Consider the following 123-residue polypeptide: MPTINQLIRKPRKAVVKRNKVPAMQACPQKRGVCTRVYTTTPKKPNSALRKVARVRLTNGFEVTSYIPGEGHNLQEHSVVMIRGGRVKDLPGVRYHIIRGVLDTQGVKDRRQRRSKYGAKRPK.

Aspartate 89 carries the post-translational modification 3-methylthioaspartic acid. Residues 104–123 (TQGVKDRRQRRSKYGAKRPK) form a disordered region. Basic residues predominate over residues 110–123 (RRQRRSKYGAKRPK).

Belongs to the universal ribosomal protein uS12 family. In terms of assembly, part of the 30S ribosomal subunit. Contacts proteins S8 and S17. May interact with IF1 in the 30S initiation complex.

In terms of biological role, with S4 and S5 plays an important role in translational accuracy. Its function is as follows. Interacts with and stabilizes bases of the 16S rRNA that are involved in tRNA selection in the A site and with the mRNA backbone. Located at the interface of the 30S and 50S subunits, it traverses the body of the 30S subunit contacting proteins on the other side and probably holding the rRNA structure together. The combined cluster of proteins S8, S12 and S17 appears to hold together the shoulder and platform of the 30S subunit. This Rhodospirillum rubrum (strain ATCC 11170 / ATH 1.1.1 / DSM 467 / LMG 4362 / NCIMB 8255 / S1) protein is Small ribosomal subunit protein uS12.